Here is a 93-residue protein sequence, read N- to C-terminus: uncharacterized protein (93 aa).

A signal peptide spans 1–11 (MALMVLMALVG). Residue C12 is the site of N-palmitoyl cysteine attachment. C12 carries S-diacylglycerol cysteine lipidation.

The protein localises to the cell membrane. This is an uncharacterized protein from Escherichia coli O6:K15:H31 (strain 536 / UPEC).